A 245-amino-acid chain; its full sequence is DNA repair protein RecO (245 aa).

It belongs to the RecO family.

In terms of biological role, involved in DNA repair and RecF pathway recombination. This Pectobacterium atrosepticum (strain SCRI 1043 / ATCC BAA-672) (Erwinia carotovora subsp. atroseptica) protein is DNA repair protein RecO.